A 201-amino-acid chain; its full sequence is Large ribosomal subunit protein uL4 (201 aa).

The interval 44–71 (RAQKTRAEVTGSGKKPWRQKGTGRARSG) is disordered.

Belongs to the universal ribosomal protein uL4 family. Part of the 50S ribosomal subunit.

Its function is as follows. One of the primary rRNA binding proteins, this protein initially binds near the 5'-end of the 23S rRNA. It is important during the early stages of 50S assembly. It makes multiple contacts with different domains of the 23S rRNA in the assembled 50S subunit and ribosome. Functionally, forms part of the polypeptide exit tunnel. The protein is Large ribosomal subunit protein uL4 of Escherichia fergusonii (strain ATCC 35469 / DSM 13698 / CCUG 18766 / IAM 14443 / JCM 21226 / LMG 7866 / NBRC 102419 / NCTC 12128 / CDC 0568-73).